A 418-amino-acid chain; its full sequence is 1-deoxy-D-xylulose 5-phosphate reductoisomerase (418 aa).

Positions 32, 33, 34, 35, and 150 each coordinate NADPH. Residue K151 participates in 1-deoxy-D-xylulose 5-phosphate binding. NADPH is bound at residue E152. D174 contacts Mn(2+). Positions 175, 176, 200, and 223 each coordinate 1-deoxy-D-xylulose 5-phosphate. Mn(2+) is bound at residue E176. G229 lines the NADPH pocket. 1-deoxy-D-xylulose 5-phosphate contacts are provided by S236, N241, K242, and E245. E245 is a Mn(2+) binding site.

This sequence belongs to the DXR family. Mg(2+) is required as a cofactor. Mn(2+) serves as cofactor.

It catalyses the reaction 2-C-methyl-D-erythritol 4-phosphate + NADP(+) = 1-deoxy-D-xylulose 5-phosphate + NADPH + H(+). Its pathway is isoprenoid biosynthesis; isopentenyl diphosphate biosynthesis via DXP pathway; isopentenyl diphosphate from 1-deoxy-D-xylulose 5-phosphate: step 1/6. Its function is as follows. Catalyzes the NADPH-dependent rearrangement and reduction of 1-deoxy-D-xylulose-5-phosphate (DXP) to 2-C-methyl-D-erythritol 4-phosphate (MEP). This is 1-deoxy-D-xylulose 5-phosphate reductoisomerase from Streptomyces coelicolor (strain ATCC BAA-471 / A3(2) / M145).